A 341-amino-acid polypeptide reads, in one-letter code: Ketol-acid reductoisomerase (NADP(+)) (341 aa).

The region spanning 3-184 (LKVYYDKDCD…GGGRSGIIET (182 aa)) is the KARI N-terminal Rossmann domain. NADP(+) is bound by residues 26–29 (FGSQ), serine 54, and 84–87 (DELQ). Residue histidine 109 is part of the active site. Position 135 (glycine 135) interacts with NADP(+). Residues 185–330 (TFKDETETDL…GRLRAMMPWI (146 aa)) form the KARI C-terminal knotted domain. Mg(2+) contacts are provided by aspartate 193, glutamate 197, glutamate 229, and glutamate 233. Serine 254 lines the substrate pocket.

The protein belongs to the ketol-acid reductoisomerase family. Requires Mg(2+) as cofactor.

It catalyses the reaction (2R)-2,3-dihydroxy-3-methylbutanoate + NADP(+) = (2S)-2-acetolactate + NADPH + H(+). The catalysed reaction is (2R,3R)-2,3-dihydroxy-3-methylpentanoate + NADP(+) = (S)-2-ethyl-2-hydroxy-3-oxobutanoate + NADPH + H(+). The protein operates within amino-acid biosynthesis; L-isoleucine biosynthesis; L-isoleucine from 2-oxobutanoate: step 2/4. It functions in the pathway amino-acid biosynthesis; L-valine biosynthesis; L-valine from pyruvate: step 2/4. In terms of biological role, involved in the biosynthesis of branched-chain amino acids (BCAA). Catalyzes an alkyl-migration followed by a ketol-acid reduction of (S)-2-acetolactate (S2AL) to yield (R)-2,3-dihydroxy-isovalerate. In the isomerase reaction, S2AL is rearranged via a Mg-dependent methyl migration to produce 3-hydroxy-3-methyl-2-ketobutyrate (HMKB). In the reductase reaction, this 2-ketoacid undergoes a metal-dependent reduction by NADPH to yield (R)-2,3-dihydroxy-isovalerate. In Helicobacter hepaticus (strain ATCC 51449 / 3B1), this protein is Ketol-acid reductoisomerase (NADP(+)).